The following is a 150-amino-acid chain: 3-dehydroquinate dehydratase (150 aa).

The Proton acceptor role is filled by Y26. The substrate site is built by N77, H83, and D90. H103 acts as the Proton donor in catalysis. Substrate contacts are provided by residues 104–105 and R114; that span reads LS.

It belongs to the type-II 3-dehydroquinase family. Homododecamer.

The enzyme catalyses 3-dehydroquinate = 3-dehydroshikimate + H2O. The protein operates within metabolic intermediate biosynthesis; chorismate biosynthesis; chorismate from D-erythrose 4-phosphate and phosphoenolpyruvate: step 3/7. Catalyzes a trans-dehydration via an enolate intermediate. The polypeptide is 3-dehydroquinate dehydratase (Erwinia tasmaniensis (strain DSM 17950 / CFBP 7177 / CIP 109463 / NCPPB 4357 / Et1/99)).